The chain runs to 245 residues: Lytic switch protein BZLF1 (245 aa).

The interval 1–167 is transactivation; that stretch reads MMDPNSTSED…RTRKPQQPES (167 aa). Residues Thr14 and Thr159 each carry the phosphothreonine; by host modification. A Bipartite nuclear localization signal motif is present at residues 157-194; sequence RRTRKPQQPESLEECDSELEIKRYKNRVASRKCRAKFK. Residues Ser167, Ser173, and Ser186 each carry the phosphoserine; by host modification. Positions 170-228 constitute a bZIP domain; that stretch reads ECDSELEIKRYKNRVASRKCRAKFKQLLQHYREVAAAKSSENDRLRLLLKQMCPSLDVD. A basic motif region spans residues 178–195; the sequence is KRYKNRVASRKCRAKFKQ. The leucine-zipper stretch occupies residues 196–228; it reads LLQHYREVAAAKSSENDRLRLLLKQMCPSLDVD. The segment at 229-245 is accessory activation domain; the sequence is SIIPRTPDVLHEDLLNF.

This sequence belongs to the bZIP family. As to quaternary structure, homodimer. Interacts (via b-ZIP domain) with the DNA polymerase processivity factor BMRF1 (via N-terminus); this interaction may inhibit BZLF1-induced transcription of the BMRF1 promoter. Interacts with human UBN1, CRTC2 and RACK1. Interacts (via N-terminus) with human PAX5 (via N-terminus); this interaction inhibits BZLF1-mediated lytic viral reactivation. Interacts (via leucine-zipper domain) with host CEBPA; this interaction induces G1 host cell cycle arrest. Interacts (via C-terminus) with host TP53BP1 (via C-terminus); this interaction is involved in the activation of the viral lytic cycle. Interacts with host chromatin-remodeling ATPase INO80; this interaction participates to the activation of early lytic viral genes by BZLF1. Interacts with host regulator of chromatin SMARCA5/hSNF2H; this interaction participates to the activation of early lytic viral genes by BZLF1. Interacts with host PLSCR1/Phospholipid scramblase 1; this interaction negatively regulates the transcriptional regulatory activity of BZLF1 by preventing the formation of the BZLF1-CBP complex.

The protein localises to the host nucleus. Transcription factor that acts as a molecular switch to induce the transition from the latent to the lytic or productive phase of the virus cycle. Mediates the switch from the latent to the lytic cycle of infection in cells containing a highly methylated viral genome. Probably binds to silenced chromatin and recruits host chromatin-remodeling enzymes. Regulates this switch by binding to 2 types of ZEBRA response elements (ZREs): the CpG-free AP-1 like elements (latency) and the methylated CpG-containing elements (lytic replication). Activates preferentially the methylated forms of the viral lytic R (BRLF1) and Na (BRRF1) gene promoters, the latters being the first genes activated during Z-mediated reactivation in latently infected cells. BZLF1 and BRLF1 act together to trigger lytic replication. Also binds the lytic origin of replication, oriLyt. Induces G1 cell cycle arrest by stabilizing the host CCAAT/enhancer binding protein CEBPA. This function is important because the lytic cycle preferentially takes place in host cells arrested in G1. This is Lytic switch protein BZLF1 from Epstein-Barr virus (strain B95-8) (HHV-4).